The chain runs to 562 residues: Protein wntless (562 aa).

At 1–13 the chain is on the cytoplasmic side; it reads MSGTILENLSGRK. Residues 14–34 form a helical membrane-spanning segment; that stretch reads LSILVASLLLCQVFCFLLGGL. Residues 35-239 are Lumenal-facing; sequence YAPLPAGHVT…AIHQNGGFTQ (205 aa). Asparagine 58 is a glycosylation site (N-linked (GlcNAc...) asparagine). Residues 240–260 traverse the membrane as a helical segment; sequence IWLMLKTVLFPFVVGIMIWFW. The Cytoplasmic segment spans residues 261-270; that stretch reads RRVHLLQRSP. A helical transmembrane segment spans residues 271 to 291; sequence ALLEYMLIYLGGALTFLNLPL. Topologically, residues 292 to 311 are lumenal; sequence EYLSLVVEMPYMLLLSDIRQ. A helical transmembrane segment spans residues 312–332; that stretch reads GIFYAMLLSFWLVFAGEHMLI. Topologically, residues 333 to 344 are cytoplasmic; that stretch reads QDAPNKSTIRSR. Residues 345 to 365 form a helical membrane-spanning segment; sequence YWKHLSAVVVGCISLFVFDIC. The Lumenal portion of the chain corresponds to 366–390; that stretch reads ERGVQLRNPFYSIWTTPLGAKVAMT. The helical transmembrane segment at 391 to 411 threads the bilayer; it reads FIILAGVSAAIYFLFLCYMIW. At 412–441 the chain is on the cytoplasmic side; it reads KVFRNIGDKRTSLPSMSQARRLHYEGLIYR. A helical membrane pass occupies residues 442 to 462; the sequence is FKFLMLATLLCAALTVAGFIM. Topologically, residues 463–482 are lumenal; it reads GQMAEGQWQWNDNVEIQLTS. A helical membrane pass occupies residues 483–503; the sequence is AFLTGVYGMWNIYIFALLILY. Residues 504–562 are Cytoplasmic-facing; that stretch reads APSHKQWPTMHHSDETTQSNENIVASAASEEIEFSHLPSDSNPSEISSLTSFTRKVAFD. Residues 539-562 are disordered; sequence HLPSDSNPSEISSLTSFTRKVAFD. Residues 541–556 are compositionally biased toward polar residues; sequence PSDSNPSEISSLTSFT.

It belongs to the wntless family. In terms of assembly, interacts with wg; in the Golgi. Interacts with Vps35, a component of the retromer complex; wls stability is regulated by Vps35.

It localises to the presynaptic cell membrane. It is found in the postsynaptic cell membrane. Its subcellular location is the cell membrane. The protein resides in the endoplasmic reticulum membrane. The protein localises to the endosome membrane. It localises to the golgi apparatus membrane. In terms of biological role, a segment polarity gene required for wingless (wg)-dependent patterning processes, acting in both wg-sending cells and wg-target cells. In non-neuronal cells wls directs wg secretion. The wls traffic loop encompasses the Golgi, the cell surface, an endocytic compartment and a retrograde route leading back to the Golgi, and involves clathrin-mediated endocytosis and the retromer complex (a conserved protein complex consisting of Vps35 and Vps26). In neuronal cells (the larval motorneuron NMJ), the wg signal moves across the synapse via the release of wls-containing exosome-like vesicles. Postsynaptic wls is required for the trafficking of fz2 through the fz2-interacting protein Grip. In Drosophila ananassae (Fruit fly), this protein is Protein wntless.